Consider the following 302-residue polypeptide: Probable 5-dehydro-4-deoxyglucarate dehydratase (302 aa).

Belongs to the DapA family.

It carries out the reaction 5-dehydro-4-deoxy-D-glucarate + H(+) = 2,5-dioxopentanoate + CO2 + H2O. Its pathway is carbohydrate acid metabolism; D-glucarate degradation; 2,5-dioxopentanoate from D-glucarate: step 2/2. In Rhizobium rhizogenes (strain K84 / ATCC BAA-868) (Agrobacterium radiobacter), this protein is Probable 5-dehydro-4-deoxyglucarate dehydratase.